Here is a 655-residue protein sequence, read N- to C-terminus: A-type voltage-gated potassium channel KCND3 (655 aa).

Over 1–182 the chain is Cytoplasmic; the sequence is MAAGVAAWLP…FENPHTSTLA (182 aa). The interaction with KCNIP1 and KCNIP2 stretch occupies residues 6–21; sequence AAWLPFARAAAIGWMP. The tract at residues 70-78 is interaction with KCNIP1; sequence EKEFFFNED. His104, Cys110, Cys131, and Cys132 together coordinate Zn(2+). At Ser153 the chain carries Phosphoserine. Residues 183-204 form a helical membrane-spanning segment; sequence LVFYYVTGFFIAVSVITNVVET. Residues 205–223 lie on the Extracellular side of the membrane; the sequence is VPCGTVPGSKELPCGERYS. A helical membrane pass occupies residues 224 to 246; that stretch reads VAFFCLDTACVMIFTVEYLLRLF. Residues 247–253 are Cytoplasmic-facing; it reads AAPSRYR. Residues 254–277 traverse the membrane as a helical segment; that stretch reads FIRSVMSIIDVVAIMPYYIGLVMT. The Extracellular portion of the chain corresponds to 278 to 283; that stretch reads NNEDVS. The chain crosses the membrane as a helical; Voltage-sensor span at residues 284 to 306; it reads GAFVTLRVFRVFRIFKFSRHSQG. At 307-318 the chain is on the cytoplasmic side; it reads LRILGYTLKSCA. The chain crosses the membrane as a helical span at residues 319–343; the sequence is SELGFLLFSLTMAIIIFATVMFYAE. The Extracellular segment spans residues 344–352; sequence KGSSASKFT. The segment at residues 353 to 366 is an intramembrane region (helical); it reads SIPASFWYTIVTMT. K(+)-binding residues include Thr367, Leu368, Gly369, and Tyr370. Residues 367–372 carry the Selectivity filter motif; it reads TLGYGD. Residues 367–374 lie within the membrane without spanning it; the sequence is TLGYGDMV. A helical transmembrane segment spans residues 378 to 400; sequence IAGKIFGSICSLSGVLVIALPVP. Residues 401–655 are Cytoplasmic-facing; sequence VIVSNFSRIY…ASNVVKVSVL (255 aa). Phosphothreonine is present on Thr459. The interval 470-487 is interaction with KCNIP1 and KCNIP2; sequence SLIESQHHHLLHCLEKTT. Positions 472–487 are mediates dendritic targeting; sequence IESQHHHLLHCLEKTT. Residue Ser569 is modified to Phosphoserine; by CaMK2D. Phosphoserine is present on Ser585. Positions 618–644 are disordered; sequence PAPPALTPEGETRPPPASPGPNTNIPS.

Belongs to the potassium channel family. D (Shal) (TC 1.A.1.2) subfamily. Kv4.3/KCND3 sub-subfamily. In terms of assembly, homotetramer. Heterotetramer with KCND2. Associates with the regulatory subunits KCNIP3 and KCNIP4. Interacts with KCNE1, KCNE2, SCN1B and KCNAB1 and DLG1. Component of heteromultimeric potassium channels. Identified in potassium channel complexes containing KCND1, KCND2, KCND3, KCNIP1, KCNIP2, KCNIP3, KCNIP4, DPP6 and DPP10. Interacts with KCNIP1; each KCNIP1 monomer interacts with two adjacent KCND3 subunits, through both the N-terminal inactivation ball of a KCND3 subunit and a C-terminal helix from the adjacent KCND3 subunit, clamping them together; this interaction stabilizes the tetrameric form and modulates the channel gating kinetics namely channel activation and inactivation kinetics and rate of recovery from inactivation. Interacts with DPP6; this interaction modulates the channel gating kinetics namely channel activation and inactivation kinetics and rate of recovery from inactivation. Interacts with KCNIP2; each KCNIP2 monomer interacts with two adjacent KCND3 subunits, through both the N-terminal inactivation ball of a KCND3 subunit and a C-terminal helix from the adjacent KCND3 subunit, clamping them together; this interaction modulates the channel gating kinetics. Post-translationally, regulated through phosphorylation at Ser-569 by CaMK2D. In terms of tissue distribution, detected in carotid body chemoreceptor cells and in frontal cortex.

It is found in the cell membrane. The protein resides in the sarcolemma. Its subcellular location is the cell projection. It localises to the dendrite. It catalyses the reaction K(+)(in) = K(+)(out). Its function is as follows. Pore-forming (alpha) subunit of voltage-gated A-type potassium channels that mediates transmembrane potassium transport in excitable membranes, in brain and heart. In cardiomyocytes, may generate the transient outward potassium current I(To). In neurons, may conduct the transient subthreshold somatodendritic A-type potassium current (ISA). Kinetics properties are characterized by fast activation at subthreshold membrane potentials, rapid inactivation, and quick recovery from inactivation. Channel properties are modulated by interactions with regulatory subunits. Interaction with the regulatory subunits KCNIP1 or KCNIP2 modulates the channel gating kinetics namely channel activation and inactivation kinetics and rate of recovery from inactivation. Likewise, interaction with DPP6 modulates the channel gating kinetics namely channel activation and inactivation kinetics. The protein is A-type voltage-gated potassium channel KCND3 of Oryctolagus cuniculus (Rabbit).